A 509-amino-acid polypeptide reads, in one-letter code: Maturase K (509 aa).

This sequence belongs to the intron maturase 2 family. MatK subfamily.

The protein localises to the plastid. The protein resides in the chloroplast. Functionally, usually encoded in the trnK tRNA gene intron. Probably assists in splicing its own and other chloroplast group II introns. The chain is Maturase K from Schlumbergera truncata (Thanksgiving cactus).